The sequence spans 400 residues: Argininosuccinate synthase (400 aa).

Residue 8 to 16 (AYSGGLDTS) coordinates ATP. Tyr-87 is a binding site for L-citrulline. Gly-117 lines the ATP pocket. L-aspartate contacts are provided by Thr-119, Asn-123, and Asp-124. Asn-123 serves as a coordination point for L-citrulline. Positions 127, 175, 260, and 272 each coordinate L-citrulline.

Belongs to the argininosuccinate synthase family. Type 1 subfamily. In terms of assembly, homotetramer.

The protein localises to the cytoplasm. The enzyme catalyses L-citrulline + L-aspartate + ATP = 2-(N(omega)-L-arginino)succinate + AMP + diphosphate + H(+). The protein operates within amino-acid biosynthesis; L-arginine biosynthesis; L-arginine from L-ornithine and carbamoyl phosphate: step 2/3. This chain is Argininosuccinate synthase, found in Mycobacterium sp. (strain JLS).